We begin with the raw amino-acid sequence, 172 residues long: Resuscitation-promoting factor RpfE (172 aa).

The signal sequence occupies residues 1-28 (MKNARTTLIAAAIAGTLVTTSPAGIANA). Residues 33 to 89 (LDPNAAAGPDAVGFDPNLPPAPDAAPVDTPPAPEDAGFDPNLPPPLAPDFLSPPAEE) are disordered. Positions 49-65 (NLPPAPDAAPVDTPPAP) are enriched in pro residues.

Belongs to the transglycosylase family. Rpf subfamily. Interacts with RipA.

In terms of biological role, factor that stimulates resuscitation of dormant cells. Has peptidoglycan (PG) hydrolytic activity. Active in the pM concentration range. Has little to no effect on actively-growing cells. PG fragments could either directly activate the resuscitation pathway of dormant bacteria or serve as a substrate for endogenous Rpf, resulting in low molecular weight products with resuscitation activity. Functionally, stimulates growth of stationary phase M.bovis (a slow-growing Mycobacterium), reduces the lag phase of diluted fast-growers M.smegmatis and Micrococcus luteus. Sequential gene disruption indicates RpfB and RpfE are higher than RpfD and RpfC in functional hierarchy. The chain is Resuscitation-promoting factor RpfE (rpfE) from Mycobacterium tuberculosis (strain ATCC 25618 / H37Rv).